The following is a 224-amino-acid chain: Orotidine 5'-phosphate decarboxylase (224 aa).

Residues Asp10, Lys32, 59–68, Thr115, Arg175, Gln184, Gly204, and Arg205 each bind substrate; that span reads DLKLHDIPNT. Lys61 acts as the Proton donor in catalysis.

The protein belongs to the OMP decarboxylase family. Type 1 subfamily. In terms of assembly, homodimer.

The enzyme catalyses orotidine 5'-phosphate + H(+) = UMP + CO2. The protein operates within pyrimidine metabolism; UMP biosynthesis via de novo pathway; UMP from orotate: step 2/2. Catalyzes the decarboxylation of orotidine 5'-monophosphate (OMP) to uridine 5'-monophosphate (UMP). This chain is Orotidine 5'-phosphate decarboxylase, found in Erythrobacter litoralis (strain HTCC2594).